A 389-amino-acid polypeptide reads, in one-letter code: MVTVEEYRKAQRAEGPATILAIGTSTPSNCVDQSTYPDYYFRITNSEHKTELKEKFKRMCDKSMIKKRYMHLTEEILKENPNMCAYMAPSLDARQDIVVVEVPKLGKEAAQKAIKEWGQPKSKITHLVFCTTSGVDMPGCDYQLAKLLGLRPSVKRLMMYQQGCFVGGTVLRLAKDLAENNKGARVLVVCSEITAVTFRGPSESHLDSLVGQALFGDGAAAIIMGSDPIIGVERPLFELVSAAQTLVPDSEGAIDGHLREVGLTFHLLKDVPGLISKNIEKSLLEAFQPLGISDWNSLFWIAHPGGPAILDQVELKLGLKQEKLRATREVLSNYGNMSSACVLFILDEMRKASTNEGLGTTGEGLEWGVLFGFGPGLTVETVVLHSVAT.

The active site involves C164.

The protein belongs to the thiolase-like superfamily. Chalcone/stilbene synthases family.

It carries out the reaction (E)-4-coumaroyl-CoA + 3 malonyl-CoA + 3 H(+) = 2',4,4',6'-tetrahydroxychalcone + 3 CO2 + 4 CoA. The protein operates within secondary metabolite biosynthesis; flavonoid biosynthesis. In terms of biological role, the primary product of this enzyme is 4,2',4',6'-tetrahydroxychalcone (also termed naringenin-chalcone or chalcone) which can under specific conditions spontaneously isomerize into naringenin. This chain is Chalcone synthase 1A (CHS1A), found in Solanum tuberosum (Potato).